A 403-amino-acid chain; its full sequence is Enoyl-[acyl-carrier-protein] reductase [NADH] (403 aa).

NAD(+) is bound by residues 49 to 54, 75 to 76, 112 to 113, and 141 to 142; these read GASSGY, FE, DA, and LA. Position 227 (Tyr-227) interacts with substrate. The Proton donor role is filled by Tyr-237. Residues Lys-246 and 276–278 each bind NAD(+); that span reads VVT.

Belongs to the TER reductase family. As to quaternary structure, monomer.

It catalyses the reaction a 2,3-saturated acyl-[ACP] + NAD(+) = a (2E)-enoyl-[ACP] + NADH + H(+). Its pathway is lipid metabolism; fatty acid biosynthesis. Functionally, involved in the final reduction of the elongation cycle of fatty acid synthesis (FAS II). Catalyzes the reduction of a carbon-carbon double bond in an enoyl moiety that is covalently linked to an acyl carrier protein (ACP). The polypeptide is Enoyl-[acyl-carrier-protein] reductase [NADH] (Pseudomonas putida (strain ATCC 47054 / DSM 6125 / CFBP 8728 / NCIMB 11950 / KT2440)).